The primary structure comprises 163 residues: NADH-quinone oxidoreductase subunit I (163 aa).

4Fe-4S ferredoxin-type domains follow at residues R55–E84 and T94–N123. Positions 64, 67, 70, 74, 103, 106, 109, and 113 each coordinate [4Fe-4S] cluster.

This sequence belongs to the complex I 23 kDa subunit family. As to quaternary structure, NDH-1 is composed of 14 different subunits. Subunits NuoA, H, J, K, L, M, N constitute the membrane sector of the complex. [4Fe-4S] cluster serves as cofactor.

It is found in the cell inner membrane. The enzyme catalyses a quinone + NADH + 5 H(+)(in) = a quinol + NAD(+) + 4 H(+)(out). In terms of biological role, NDH-1 shuttles electrons from NADH, via FMN and iron-sulfur (Fe-S) centers, to quinones in the respiratory chain. The immediate electron acceptor for the enzyme in this species is believed to be ubiquinone. Couples the redox reaction to proton translocation (for every two electrons transferred, four hydrogen ions are translocated across the cytoplasmic membrane), and thus conserves the redox energy in a proton gradient. The sequence is that of NADH-quinone oxidoreductase subunit I from Caulobacter vibrioides (strain ATCC 19089 / CIP 103742 / CB 15) (Caulobacter crescentus).